Here is a 192-residue protein sequence, read N- to C-terminus: Adenylate kinase (192 aa).

ATP is bound at residue 10–15 (GAGKGT). The segment at 30–59 (STGDMLREVIRRETEIGKKAKAMINAGTLV) is NMP. AMP-binding positions include Thr-31, Arg-36, 57 to 59 (TLV), 85 to 88 (GYPR), and Gln-92. Residues 126–142 (KRVQETIIAGGQVRSDD) are LID. Arg-127 serves as a coordination point for ATP. AMP contacts are provided by Arg-139 and Arg-150. Ile-178 contributes to the ATP binding site.

Belongs to the adenylate kinase family. Monomer.

It localises to the cytoplasm. The enzyme catalyses AMP + ATP = 2 ADP. The protein operates within purine metabolism; AMP biosynthesis via salvage pathway; AMP from ADP: step 1/1. Its function is as follows. Catalyzes the reversible transfer of the terminal phosphate group between ATP and AMP. Plays an important role in cellular energy homeostasis and in adenine nucleotide metabolism. The sequence is that of Adenylate kinase from Bartonella henselae (strain ATCC 49882 / DSM 28221 / CCUG 30454 / Houston 1) (Rochalimaea henselae).